The primary structure comprises 989 residues: DEAD-box ATP-dependent RNA helicase 45 (989 aa).

Basic and acidic residues-rich tracts occupy residues 1–39 (MLEK…KRCD) and 64–101 (RDSK…EKEK). Disordered stretches follow at residues 1-248 (MLEK…AADE) and 305-330 (QGED…DDEE). The stretch at 88 to 182 (LKRDRERRER…ELKRQNEEAQ (95 aa)) forms a coiled coil. Ser-119 is subject to Phosphoserine. Residues 134-179 (SRHGDDDVEKKTRDEQVEDEQKQLAEEVEKRRRRVQEWQELKRQNE) are compositionally biased toward basic and acidic residues. Ser-200 bears the Phosphoserine mark. Over residues 203-222 (EVKSDSEMDVDRDTKLENGG) the composition is skewed to basic and acidic residues. Over residues 230-239 (ENETAVTVSE) the composition is skewed to polar residues. The span at 321–330 (DPSLDEDDEE) shows a compositional bias: acidic residues. The Q motif signature appears at 396 to 424 (QFWHQTGLTSKILDTLKKLNYEKPMPIQA). Positions 427 to 605 (LPIIMSGRDC…RKVLNKPVEI (179 aa)) constitute a Helicase ATP-binding domain. ATP is bound at residue 440 to 447 (AKTGSGKT). The DEAD box motif lies at 553 to 556 (DEAD). One can recognise a Helicase C-terminal domain in the interval 590 to 748 (QVETLARKVL…PVPDDVKAVA (159 aa)).

This sequence belongs to the DEAD box helicase family. DDX46/PRP5 subfamily.

The enzyme catalyses ATP + H2O = ADP + phosphate + H(+). The polypeptide is DEAD-box ATP-dependent RNA helicase 45 (RH45) (Arabidopsis thaliana (Mouse-ear cress)).